The chain runs to 132 residues: Small ribosomal subunit protein uS11 (132 aa).

The protein belongs to the universal ribosomal protein uS11 family. As to quaternary structure, part of the 30S ribosomal subunit.

Its function is as follows. Located on the platform of the 30S subunit. This is Small ribosomal subunit protein uS11 (rps11) from Korarchaeum cryptofilum (strain OPF8).